We begin with the raw amino-acid sequence, 317 residues long: tRNA-cytidine(32) 2-sulfurtransferase (317 aa).

A disordered region spans residues 1-29 (MNTANNTLPTAADWAGEDGAPDAADTRKI). A PP-loop motif motif is present at residues 65–70 (SGGKDS). Residues C140, C143, and C231 each coordinate [4Fe-4S] cluster.

This sequence belongs to the TtcA family. In terms of assembly, homodimer. Mg(2+) serves as cofactor. Requires [4Fe-4S] cluster as cofactor.

Its subcellular location is the cytoplasm. The catalysed reaction is cytidine(32) in tRNA + S-sulfanyl-L-cysteinyl-[cysteine desulfurase] + AH2 + ATP = 2-thiocytidine(32) in tRNA + L-cysteinyl-[cysteine desulfurase] + A + AMP + diphosphate + H(+). It functions in the pathway tRNA modification. Its function is as follows. Catalyzes the ATP-dependent 2-thiolation of cytidine in position 32 of tRNA, to form 2-thiocytidine (s(2)C32). The sulfur atoms are provided by the cysteine/cysteine desulfurase (IscS) system. This Acidovorax ebreus (strain TPSY) (Diaphorobacter sp. (strain TPSY)) protein is tRNA-cytidine(32) 2-sulfurtransferase.